An 859-amino-acid polypeptide reads, in one-letter code: Auxin response factor 2 (859 aa).

The tract at residues 1–48 is disordered; that stretch reads MASSEVSMKGNRGGDNFSSSGFSDPKETRNVSVAGEGQKSNSTRSAAA. Low complexity predominate over residues 14-23; the sequence is GDNFSSSGFS. The TF-B3 DNA-binding region spans 164-266; the sequence is FCKTLTASDT…ELRVGVRRAM (103 aa). A compositionally biased stretch (pro residues) spans 396-407; the sequence is LAPPALSPVPMP. Disordered regions lie at residues 396–442, 687–736, and 829–859; these read LAPP…LPAS, IASP…RSCT, and RSEEEAVVGEGSDAKDAKSASNPSLSSAGNS. 2 stretches are compositionally biased toward polar residues: residues 416-426 and 695-704; these read IAPSSPDSSML and LSDQSKGSKS. Residues 733–817 enclose the PB1 domain; sequence RSCTKVHKQG…RKIFIYTKEE (85 aa). Over residues 847 to 859 the composition is skewed to polar residues; sequence SASNPSLSSAGNS.

The protein belongs to the ARF family. As to quaternary structure, homodimers and heterodimers. Interacts with ARF1. As to expression, expressed in the whole plant.

The protein resides in the nucleus. In terms of biological role, auxin response factors (ARFs) are transcriptional factors that bind specifically to the DNA sequence 5'-TGTCTC-3' found in the auxin-responsive promoter elements (AuxREs). Could act as transcriptional activator or repressor. Formation of heterodimers with Aux/IAA proteins may alter their ability to modulate early auxin response genes expression. Promotes flowering, stamen development, floral organ abscission and fruit dehiscence. Functions independently of ethylene and cytokinin response pathways. May act as a repressor of cell division and organ growth. In Arabidopsis thaliana (Mouse-ear cress), this protein is Auxin response factor 2 (ARF2).